We begin with the raw amino-acid sequence, 262 residues long: Biotin carboxyl carrier protein of acetyl-CoA carboxylase, chloroplastic (262 aa).

Residues 1 to 47 constitute a chloroplast transit peptide; sequence MASSLAPATKAATNLRLTHSLRFSPKPNNLRFATKPGNTLLCTRVKA. 2 disordered regions span residues 53–84 and 125–185; these read ALDS…PSSS and IRKK…KSSL. Over residues 132-160 the composition is skewed to pro residues; the sequence is PQPPPAPQPSVVYSPPPPALPPPPVPAST. Residues 161–185 are compositionally biased toward low complexity; the sequence is PAPTLARATPTPTSAPAVKSAKSSL. In terms of domain architecture, Biotinyl-binding spans 185–261; sequence LPPLKSPMAG…SVDTPLFVIQ (77 aa). Residue lysine 227 is modified to N6-biotinyllysine.

It localises to the plastid. The protein resides in the chloroplast. Its pathway is lipid metabolism; fatty acid biosynthesis. Functionally, this protein is a component of the acetyl coenzyme A carboxylase complex; first, biotin carboxylase catalyzes the carboxylation of the carrier protein and then the transcarboxylase transfers the carboxyl group to form malonyl-CoA. This is Biotin carboxyl carrier protein of acetyl-CoA carboxylase, chloroplastic (ACCB-1) from Glycine max (Soybean).